The primary structure comprises 208 residues: Small ribosomal subunit protein uS4 (208 aa).

Positions 30 to 49 are disordered; it reads KSALEKRPYPPGQHGQRRSK. The S4 RNA-binding domain occupies 98-161; the sequence is RRLDNVVYRM…KNNPQIQRSL (64 aa).

Belongs to the universal ribosomal protein uS4 family. As to quaternary structure, part of the 30S ribosomal subunit. Contacts protein S5. The interaction surface between S4 and S5 is involved in control of translational fidelity.

Its function is as follows. One of the primary rRNA binding proteins, it binds directly to 16S rRNA where it nucleates assembly of the body of the 30S subunit. In terms of biological role, with S5 and S12 plays an important role in translational accuracy. This Nitratiruptor sp. (strain SB155-2) protein is Small ribosomal subunit protein uS4.